Consider the following 162-residue polypeptide: Caveolin-2 (162 aa).

Topologically, residues 1–86 are cytoplasmic; it reads MGLETEKADV…FEISKYVLYK (86 aa). The residue at position 19 (Tyr19) is a Phosphotyrosine; by SRC. Phosphoserine is present on residues Ser20 and Ser23. The segment at residues 87 to 107 is an intramembrane region (helical); sequence FLTVFLAIPLAFAAGVLFAVL. At 108–162 the chain is on the cytoplasmic side; it reads SCLHIWILMPFVKTCLMVLPSVQTIWRSVTDVVIAPLCASIGRSFSSVGLQLSHD.

The protein belongs to the caveolin family. In terms of assembly, monomer or homodimer. Interacts with CAV1; the interaction forms a stable heterooligomeric complex that is required for targeting to lipid rafts and for caveolae formation. Tyrosine phosphorylated forms do not form heterooligomers with the Tyr-19-phosphorylated form existing as a monomer or dimer. Interacts (tyrosine phosphorylated form) with the SH2 domain-containing proteins, RASA1, NCK1 and SRC. Interacts (tyrosine phosphorylated form) with INSR. Interacts (Tyr-19 phosphorylated form) with MAPK1 (phosphorylated form); the interaction, promoted by insulin, leads to nuclear location and MAPK1 activation. Interacts with STAT3; the interaction is increased on insulin-induced tyrosine phosphorylation leading to STAT activation. Phosphorylated on serine and tyrosine residues. CAV1 promotes phosphorylation on Ser-23 which then targets the complex to the plasma membrane, lipid rafts and caveolae. Phosphorylation on Tyr-19 is required for insulin-induced phosphorylation of MAPK1 and DNA binding of STAT3. Tyrosine phosphorylation is induced by both EGF and insulin.

Its subcellular location is the nucleus. The protein resides in the cytoplasm. The protein localises to the golgi apparatus membrane. It is found in the cell membrane. It localises to the membrane. Its subcellular location is the caveola. Functionally, may act as a scaffolding protein within caveolar membranes. Interacts directly with G-protein alpha subunits and can functionally regulate their activity. Acts as an accessory protein in conjunction with CAV1 in targeting to lipid rafts and driving caveolae formation. Positive regulator of cellular mitogenesis of the MAPK signaling pathway. Required for the insulin-stimulated nuclear translocation and activation of MAPK1 and STAT3, and the subsequent regulation of cell cycle progression. The chain is Caveolin-2 (CAV2) from Oryctolagus cuniculus (Rabbit).